The primary structure comprises 1465 residues: MSLVTVPFYQKRHRHFDQSYRNIQTRYLLDEYASKKRASTQASSQKSLSQRSSSQRASSQTSLGGTICRVCAKRVSTQEDEEQENRSRYQSLVAAYGEAKRQRFLSELAHLEEDVHLARSQARDKLDKYAIQQMMEDKLAWERHTFEERISRAPEILVRLRSHTVWERMSVKLCFTVQGFPTPVVQWYKDGSLICQAAEPGKYRIESNYGVHTLEINRADFDDTATYSAVATNAHGQVSTNAAVVVRRFRGDEEPFRSVGLPIGLPLSSMIPYTHFDVQFLEKFGVTFRREGETVTLKCTMLVTPDLKRVQPRAEWYRDDVLLKESKWTKMFFGEGQASLSFSHLHKDDEGLYTLRIVSRGGVSDHSAFLFVRDADPLVTGAPGAPMDLQCHDANRDYVIVTWKPPNTTTESPVMGYFVDRCEVGTNNWVQCNDAPVKICKYPVTGLFEGRSYIFRVRAVNSAGISRPSRVSDAVAALDPLDLRRLQAVHLEGEKEIAIYQDDLEGDAQVPGPPTGVHASEISRNYVVLSWEPPTPRGKDPLMYFIEKSVVGSGSWQRVNAQTAVRSPRYAVFDLMEGKSYVFRVLSANRHGLSEPSEITSPIQAQDVTVVPSAPGRVLASRNTKTSVVVQWDRPKHEEDLLGYYVDCCVAGTNLWEPCNHKPIGYNRFVVHGLTTGEQYIFRVKAVNAVGMSENSQESDVIKVQAALTVPSHPYGITLLNCDGHSMTLGWKVPKFSGGSPILGYYLDKREVHHKNWHEVNSSPSKPTILTVDGLTEGSLYEFKIAAVNLAGIGEPSDPSEHFKCEAWTMPEPGPAYDLTFCEVRDTSLVMLWKAPVYSGSSPVSGYFVDFREEDAGEWITVNQTTTASRYLKVSDLQQGKTYVFRVRAVNANGVGKPSDTSEPVLVEARPGTKEISAGVDEQGNIYLGFDCQEMTDASQFTWCKSYEEISDDERFKIETVGDHSKLYLKNPDKEDLGTYSVSVSDTDGVSSSFVLDPEELERLMALSNEIKNPTIPLKSELAYEIFDKGRVRFWLQAEHLSPDASYRFIINDREVSDSEIHRIKCDKATGIIEMVMDRFSIENEGTYTVQIHDGKAKSQSSLVLIGDAFKTVLEEAEFQRKEFLRKQGPHFAEYLHWDVTEECEVRLVCKVANTKKETVFKWLKDDVLYETETLPNLERGICELLIPKLSKKDHGEYKATLKDDRGQDVSILEIAGKVYDDMILAMSRVCGKSASPLKVLCTPEGIRLQCFMKYFTDEMKVNWCHKDAKISSSEHMRIGGSEEMAWLQICEPTEKDKGKYTFEIFDGKDNHQRSLDLSGQAFDEAFAEFQQFKAAAFAEKNRGRLIGGLPDVVTIMEGKTLNLTCTVFGNPDPEVIWFKNDQDIQLSEHFSVKVEQAKYVSMTIKGVTSEDSGKYSINIKNKYGGEKIDVTVSVYKHGEKIPDMAPPQQAKPKLIPASASAAGQ.

Residues 38–61 (ASTQASSQKSLSQRSSSQRASSQT) are disordered. A compositionally biased stretch (low complexity) spans 41-61 (QASSQKSLSQRSSSQRASSQT). 2 Ig-like C2-type domains span residues 154-245 (PEIL…AAVV) and 266-371 (PLSS…AFLF). 5 Fibronectin type-III domains span residues 385–480 (APMD…ALDP), 513–608 (PPTG…AQDV), 614–707 (APGR…VQAA), 710–812 (VPSH…TMPE), and 815–912 (PAYD…ARPG). Ig-like C2-type domains follow at residues 904-1002 (PVLV…EELE), 1130-1211 (PHFA…QDVS), and 1345-1434 (RLIG…VTVS). The segment at 1442–1465 (IPDMAPPQQAKPKLIPASASAAGQ) is disordered.

In terms of assembly, interacts with TTN/titin.

The protein resides in the cytoplasm. It localises to the myofibril. It is found in the sarcomere. Its subcellular location is the m line. Functionally, major component of the vertebrate myofibrillar M band. Binds myosin, titin, and light meromyosin. This binding is dose dependent. The polypeptide is Myomesin-2 (MYOM2) (Homo sapiens (Human)).